The sequence spans 1563 residues: Galactose-specific cell agglutination protein gsf2 (1563 aa).

A signal peptide spans 1–27; sequence MSVRRFLSTSARALLFTAALLPSLTSG. 29 tandem repeats follow at residues 203–280, 281–358, 359–436, 437–514, 515–592, 593–670, 671–750, 751–825, 826–869, 870–913, 914–957, 958–1001, 1002–1045, 1046–1089, 1090–1133, 1134–1140, 1141–1162, 1163–1184, 1185–1200, 1201–1221, 1223–1244, 1245–1266, 1267–1282, 1283–1304, 1305–1326, 1327–1348, 1349–1364, 1365–1386, and 1387–1397. The interval 203-825 is 8 X 78 AA approximate tandem repeats; it reads TTTTTVGYPG…IPTGTTGTTT (623 aa). Asn-224, Asn-263, Asn-302, Asn-341, Asn-380, Asn-419, Asn-458, Asn-497, Asn-536, Asn-575, Asn-614, and Asn-653 each carry an N-linked (GlcNAc...) asparagine glycan. Residue Asn-784 is glycosylated (N-linked (GlcNAc...) asparagine). Positions 826–1140 are 8 X 44 AA approximate tandem repeats; the sequence is VVIQTPTTVT…TTTVVINTPT (315 aa). The segment at 1135–1393 is disordered; sequence VINTPTTTGS…TQVTTATEVQ (259 aa). The 13 X 22 AA approximate tandem repeats stretch occupies residues 1141 to 1397; that stretch reads TTGSEVLPTT…TATEVQPTTA (257 aa). Asn-1510, Asn-1516, Asn-1529, and Asn-1532 each carry an N-linked (GlcNAc...) asparagine glycan. Residue Ser-1539 is the site of GPI-anchor amidated serine attachment. A propeptide spans 1540 to 1563 (removed in mature form); sequence SAGANKPIAYLTFVSLFVYIVTLI.

Belongs to the mam3/map4 family.

Its subcellular location is the cell membrane. Functionally, galactose-specific adhesion protein essential for non-sexual flocculation and filamentous growth. Required for adhesion and filamentous growth through recognition of galactose residues on cell surface glycoconjugates. Induces flocculation when overexpressed. This is Galactose-specific cell agglutination protein gsf2 from Schizosaccharomyces pombe (strain 972 / ATCC 24843) (Fission yeast).